The following is a 330-amino-acid chain: D-lactate dehydrogenase (330 aa).

NAD(+)-binding positions include 156–157, Asp176, 206–207, 233–235, and Asp259; these read RI, VP, and AAR. Arg235 is an active-site residue. The active site involves Glu264. Catalysis depends on His296, which acts as the Proton donor.

It belongs to the D-isomer specific 2-hydroxyacid dehydrogenase family.

It carries out the reaction (R)-lactate + NAD(+) = pyruvate + NADH + H(+). This chain is D-lactate dehydrogenase (ldhD), found in Staphylococcus aureus.